Reading from the N-terminus, the 423-residue chain is MLDPKILRQNLEHVVEKLRRRGFEMDSDTFLQLENKRKEAQLAIQSFQTKRNQLSKTIGMAKSKGENPEPLMAEVSHLNDELKQEEANFETIQKAFSDFQLAIPNLPHDSVPDGKSENDNREIRQWGAPPGFDFTPKDHTVLGERDNQLDFEAAAKLSGARFVVLRGSLARAHRALAQFMLDLHTDQHGYEEVYVPYLVHEECLYGTGQLPKFREEQFQVAGDRNFFLVPTGEVPLVNLARDEIIEAPALPKKWVAQTPCFRSEAGSYGKDVRGMIRQHQFQKVELVQLVQPENSYQALEEITRQAEKVLQLLALPYRVVELCAGDLGFAAAKTYDLEVWLPSQNKYREISSCSNCEDFQARRIQARWRNPKTGKPELLHTLNGSGLAVGRTLVAVMENYQQADGHIRVPDALKSYMGGVDYF.

Positions Pro-107–Pro-130 are disordered. The segment covering Ser-110 to Arg-124 has biased composition (basic and acidic residues). Thr-231–Glu-233 provides a ligand contact to L-serine. Arg-262 to Glu-264 is an ATP binding site. Residue Glu-285 coordinates L-serine. Glu-349–Ser-352 lines the ATP pocket. Ser-385 lines the L-serine pocket.

The protein belongs to the class-II aminoacyl-tRNA synthetase family. Type-1 seryl-tRNA synthetase subfamily. In terms of assembly, homodimer. The tRNA molecule binds across the dimer.

The protein localises to the cytoplasm. The catalysed reaction is tRNA(Ser) + L-serine + ATP = L-seryl-tRNA(Ser) + AMP + diphosphate + H(+). It carries out the reaction tRNA(Sec) + L-serine + ATP = L-seryl-tRNA(Sec) + AMP + diphosphate + H(+). The protein operates within aminoacyl-tRNA biosynthesis; selenocysteinyl-tRNA(Sec) biosynthesis; L-seryl-tRNA(Sec) from L-serine and tRNA(Sec): step 1/1. In terms of biological role, catalyzes the attachment of serine to tRNA(Ser). Is also able to aminoacylate tRNA(Sec) with serine, to form the misacylated tRNA L-seryl-tRNA(Sec), which will be further converted into selenocysteinyl-tRNA(Sec). This chain is Serine--tRNA ligase, found in Coxiella burnetii (strain Dugway 5J108-111).